The primary structure comprises 146 residues: Hemoglobin subunit beta (146 aa).

At Val-1 the chain carries N-acetylvaline. Residues 2–146 enclose the Globin domain; sequence NLTAAEKTQV…VANALAHKYH (145 aa). Thr-12 is subject to Phosphothreonine. Lys-59 is modified (N6-acetyllysine). His-63 serves as a coordination point for heme b. Lys-82 carries the N6-acetyllysine modification. His-92 is a binding site for heme b. Residue Cys-93 is modified to S-nitrosocysteine. At Lys-144 the chain carries N6-acetyllysine.

It belongs to the globin family. In terms of assembly, heterotetramer of two alpha chains and two beta chains. In terms of tissue distribution, red blood cells.

Functionally, involved in oxygen transport from the lung to the various peripheral tissues. This is Hemoglobin subunit beta (HBB) from Loxodonta africana (African elephant).